Here is a 94-residue protein sequence, read N- to C-terminus: Small ribosomal subunit protein uS19 (94 aa).

Belongs to the universal ribosomal protein uS19 family.

Protein S19 forms a complex with S13 that binds strongly to the 16S ribosomal RNA. This is Small ribosomal subunit protein uS19 from Nitrosomonas eutropha (strain DSM 101675 / C91 / Nm57).